Here is a 475-residue protein sequence, read N- to C-terminus: Argininosuccinate lyase 1 (475 aa).

This sequence belongs to the lyase 1 family. Argininosuccinate lyase subfamily.

It localises to the cytoplasm. It carries out the reaction 2-(N(omega)-L-arginino)succinate = fumarate + L-arginine. It functions in the pathway amino-acid biosynthesis; L-arginine biosynthesis; L-arginine from L-ornithine and carbamoyl phosphate: step 3/3. This Pseudomonas fluorescens (strain Pf0-1) protein is Argininosuccinate lyase 1.